The following is a 369-amino-acid chain: Glutamate 5-kinase (369 aa).

Residue Lys11 participates in ATP binding. The substrate site is built by Ser51, Asp138, and Asn150. ATP-binding positions include 170-171 (TD) and 212-218 (TGGMATK). One can recognise a PUA domain in the interval 277-355 (NGTIVIDDGA…QDIYAVLGYE (79 aa)).

It belongs to the glutamate 5-kinase family.

The protein resides in the cytoplasm. The enzyme catalyses L-glutamate + ATP = L-glutamyl 5-phosphate + ADP. Its pathway is amino-acid biosynthesis; L-proline biosynthesis; L-glutamate 5-semialdehyde from L-glutamate: step 1/2. Catalyzes the transfer of a phosphate group to glutamate to form L-glutamate 5-phosphate. The chain is Glutamate 5-kinase from Aliivibrio salmonicida (strain LFI1238) (Vibrio salmonicida (strain LFI1238)).